Here is a 199-residue protein sequence, read N- to C-terminus: Gamma-glutamylcyclotransferase 2-3 (199 aa).

5 to 10 (VFGYGS) serves as a coordination point for substrate. Glutamate 86 functions as the Proton acceptor in the catalytic mechanism.

It belongs to the gamma-glutamylcyclotransferase family. Mn(2+) serves as cofactor.

The protein resides in the cytoplasm. The enzyme catalyses glutathione = L-cysteinylglycine + 5-oxo-L-proline. Converts GSH to 5-oxoproline and cysteine-glycine (Cys-Gly) dipeptide in vitro and plays a significant role in glutathione (GSH) homeostasis. Has no activity towards gamma-glutamyl-L-cysteine but possesses very low activity towards gamma-glutamyl-L-alanine. In Arabidopsis thaliana (Mouse-ear cress), this protein is Gamma-glutamylcyclotransferase 2-3.